A 532-amino-acid chain; its full sequence is 2,3-bisphosphoglycerate-independent phosphoglycerate mutase (532 aa).

2 residues coordinate Mn(2+): Asp-15 and Ser-65. Ser-65 acts as the Phosphoserine intermediate in catalysis. Substrate-binding positions include His-126, 156 to 157 (RD), Arg-188, Arg-194, 258 to 261 (RPDR), and Lys-331. Residues Asp-398, His-402, Asp-439, His-440, and His-457 each contribute to the Mn(2+) site.

The protein belongs to the BPG-independent phosphoglycerate mutase family. Monomer. Mn(2+) is required as a cofactor.

It catalyses the reaction (2R)-2-phosphoglycerate = (2R)-3-phosphoglycerate. It participates in carbohydrate degradation; glycolysis; pyruvate from D-glyceraldehyde 3-phosphate: step 3/5. Its function is as follows. Catalyzes the interconversion of 2-phosphoglycerate and 3-phosphoglycerate. This chain is 2,3-bisphosphoglycerate-independent phosphoglycerate mutase, found in Synechococcus elongatus (strain ATCC 33912 / PCC 7942 / FACHB-805) (Anacystis nidulans R2).